Reading from the N-terminus, the 395-residue chain is Putative pyridoxal phosphate-dependent acyltransferase (395 aa).

Position 110 to 111 (110 to 111 (GF)) interacts with pyridoxal 5'-phosphate. His135 lines the substrate pocket. Pyridoxal 5'-phosphate-binding positions include Ser185, 210 to 213 (DDAH), and 240 to 243 (TLSK). Lys243 is modified (N6-(pyridoxal phosphate)lysine). Thr357 contributes to the substrate binding site.

The protein belongs to the class-II pyridoxal-phosphate-dependent aminotransferase family. As to quaternary structure, homodimer. Requires pyridoxal 5'-phosphate as cofactor.

The polypeptide is Putative pyridoxal phosphate-dependent acyltransferase (Staphylococcus aureus (strain Mu50 / ATCC 700699)).